The following is a 160-amino-acid chain: Small ribosomal subunit protein uS7 (160 aa).

The protein belongs to the universal ribosomal protein uS7 family. As to quaternary structure, part of the 30S ribosomal subunit. Contacts proteins S9 and S11.

In terms of biological role, one of the primary rRNA binding proteins, it binds directly to 16S rRNA where it nucleates assembly of the head domain of the 30S subunit. Is located at the subunit interface close to the decoding center, probably blocks exit of the E-site tRNA. The chain is Small ribosomal subunit protein uS7 from Anaplasma marginale (strain Florida).